Consider the following 213-residue polypeptide: Large ribosomal subunit protein uL1 (213 aa).

The protein belongs to the universal ribosomal protein uL1 family. Part of the 50S ribosomal subunit.

Binds directly to 23S rRNA. Probably involved in E site tRNA release. Functionally, protein L1 is also a translational repressor protein, it controls the translation of its operon by binding to its mRNA. In Methanococcus voltae, this protein is Large ribosomal subunit protein uL1.